A 346-amino-acid polypeptide reads, in one-letter code: MTRLCRTFQTAPAAIPNDNSAKFLVSGLTSKGFQAPDWLVPDIEDGTAPSMKDEAVDNIIEHIPDHADDFAGDILPRVEWAYDDANARERGIEQVTRLAEAVGEELDGFVFPKVGRLDDVRDAAGVIADAERDAGLPEGTLEMAIILETAPGRSDLREICQYATDSRLSGLVFGPVDYTAELGGRTLDGERPRWDGLLEALSNETSAADIVAIGGPFDQLFHERAGVTYYNAEGYADQVAYEATIGIDGSWSLHPKQTEQANRIHMPTVEEMERDLHKIESFNEAKREGTGAVVVDGQMVDEATYKNFANTVKTVRAIDETHPAQTEAYYDDDLLARARDVELIFG.

Mg(2+) contacts are provided by E148 and D177. Substrate-binding positions include 176 to 177 and 253 to 254; these read VD and LH.

The protein belongs to the HpcH/HpaI aldolase family. Requires Mg(2+) as cofactor. The cofactor is Mn(2+).

It carries out the reaction (S)-malyl-CoA = glyoxylate + acetyl-CoA. It catalyses the reaction (2R,3S)-beta-methylmalyl-CoA = propanoyl-CoA + glyoxylate. In terms of biological role, involved in the methylaspartate cycle. Catalyzes the reversible cleavage of beta-methylmalyl-CoA to propionyl-CoA and glyoxylate, as well as the reversible cleavage of (S)-malyl-CoA to acetyl-CoA and glyoxylate. In addition, it has a small malyl-CoA thioesterase activity. It can also catalyze the cleavage of (S)-citramalyl-CoA to acetyl-CoA and pyruvate. The chain is L-malyl-CoA/beta-methylmalyl-CoA lyase (citE1) from Haloarcula marismortui (strain ATCC 43049 / DSM 3752 / JCM 8966 / VKM B-1809) (Halobacterium marismortui).